The sequence spans 201 residues: Large ribosomal subunit protein uL4 (201 aa).

The interval 44 to 71 (RAQKTRAEVTGSGKKPWRQKGTGRARSG) is disordered.

This sequence belongs to the universal ribosomal protein uL4 family. In terms of assembly, part of the 50S ribosomal subunit.

One of the primary rRNA binding proteins, this protein initially binds near the 5'-end of the 23S rRNA. It is important during the early stages of 50S assembly. It makes multiple contacts with different domains of the 23S rRNA in the assembled 50S subunit and ribosome. In terms of biological role, forms part of the polypeptide exit tunnel. The protein is Large ribosomal subunit protein uL4 of Shigella flexneri serotype 5b (strain 8401).